Reading from the N-terminus, the 127-residue chain is Glycine cleavage system H protein (127 aa).

The Lipoyl-binding domain maps to 22–104 (AVVIGITHFA…YEGAWMVKVE (83 aa)). The residue at position 63 (Lys63) is an N6-lipoyllysine.

It belongs to the GcvH family. In terms of assembly, the glycine cleavage system is composed of four proteins: P, T, L and H. (R)-lipoate is required as a cofactor.

In terms of biological role, the glycine cleavage system catalyzes the degradation of glycine. The H protein shuttles the methylamine group of glycine from the P protein to the T protein. Functionally, is also involved in protein lipoylation via its role as an octanoyl/lipoyl carrier protein intermediate. The protein is Glycine cleavage system H protein of Bacillus mycoides (strain KBAB4) (Bacillus weihenstephanensis).